The chain runs to 711 residues: DNA ligase (711 aa).

Residues 39-43, 88-89, and Glu-119 each bind NAD(+); these read DAEYD and SL. The N6-AMP-lysine intermediate role is filled by Lys-121. NAD(+) is bound by residues Arg-142, Glu-179, Lys-295, and Lys-319. 4 residues coordinate Zn(2+): Cys-416, Cys-419, Cys-434, and Cys-440. Residues 630 to 711 form the BRCT domain; that stretch reads ESVSSLAGRA…LRELLAGAGA (82 aa).

Belongs to the NAD-dependent DNA ligase family. LigA subfamily. Mg(2+) is required as a cofactor. Requires Mn(2+) as cofactor.

It catalyses the reaction NAD(+) + (deoxyribonucleotide)n-3'-hydroxyl + 5'-phospho-(deoxyribonucleotide)m = (deoxyribonucleotide)n+m + AMP + beta-nicotinamide D-nucleotide.. Functionally, DNA ligase that catalyzes the formation of phosphodiester linkages between 5'-phosphoryl and 3'-hydroxyl groups in double-stranded DNA using NAD as a coenzyme and as the energy source for the reaction. It is essential for DNA replication and repair of damaged DNA. This is DNA ligase from Halorhodospira halophila (strain DSM 244 / SL1) (Ectothiorhodospira halophila (strain DSM 244 / SL1)).